A 234-amino-acid polypeptide reads, in one-letter code: Protein CIST1 (234 aa).

Residues 1 to 24 form the signal peptide; sequence MACPQLPPLLLLVLVVLLKAGVNY. Residues 25 to 180 are Extracellular-facing; that stretch reads NTPFTDIVTS…GPRELHRNPS (156 aa). Residues 41–121 are compositionally biased toward polar residues; the sequence is SPVSSLISSP…THPSSGSPSA (81 aa). Positions 41–174 are disordered; that stretch reads SPVSSLISSP…PAPGDTGPRE (134 aa). Low complexity predominate over residues 122-140; sequence ELTPSSHSTLPSSESLTPH. Residues 141 to 159 are compositionally biased toward polar residues; that stretch reads WSPTSHSPGTEPLTSTDQT. A helical membrane pass occupies residues 181-201; sequence VVVVVCLLVSLLLIGSVVMAV. Residues 202 to 234 are Cytoplasmic-facing; it reads RFCHRNESKFENLDEVSMGSVNDRLSFAHHLQE.

The protein localises to the membrane. This Homo sapiens (Human) protein is Protein CIST1.